The primary structure comprises 263 residues: 4'-phosphopantetheinyl transferase pptA (263 aa).

It belongs to the P-Pant transferase superfamily.

The enzyme catalyses apo-[ACP] + CoA = holo-[ACP] + adenosine 3',5'-bisphosphate + H(+). Its function is as follows. Transfers the 4'-phosphopantetheine moiety from coenzyme A to a Ser of an acyl-carrier-protein. Activates the peptidyl carrier protein (PCP) domains of surfactin synthas. In Paxillus involutus (Naked brimcap), this protein is 4'-phosphopantetheinyl transferase pptA (pptA).